We begin with the raw amino-acid sequence, 91 residues long: MAERTTSGTPAKRSVRRRFSRRKGCRFCADNTLKIDYKEIRNLRYFITERGKIVPRRISGNCAEHQRKIREAIKRARNIALLPFTAGHSLD.

It belongs to the bacterial ribosomal protein bS18 family. In terms of assembly, part of the 30S ribosomal subunit. Forms a tight heterodimer with protein bS6.

In terms of biological role, binds as a heterodimer with protein bS6 to the central domain of the 16S rRNA, where it helps stabilize the platform of the 30S subunit. This is Small ribosomal subunit protein bS18 from Syntrophotalea carbinolica (strain DSM 2380 / NBRC 103641 / GraBd1) (Pelobacter carbinolicus).